The primary structure comprises 132 residues: Cell division protein FtsL (132 aa).

Residues 1-50 (MAELKKMRHNHYDVPVMDEPVIASQIKKTNQKKESFQLPQKKLNKISVFE) are Cytoplasmic-facing. The helical transmembrane segment at 51–71 (KILCILLLCSIVGIVVITIQI) threads the bilayer. The Extracellular segment spans residues 72 to 132 (RTTISETMNN…EIDGNLRKVK (61 aa)).

It belongs to the FtsL family.

The protein localises to the cell membrane. Functionally, essential cell division protein. In Melissococcus plutonius (strain ATCC 35311 / DSM 29964 / CIP 104052 / LMG 20360 / NCIMB 702443), this protein is Cell division protein FtsL.